We begin with the raw amino-acid sequence, 625 residues long: tRNA uridine 5-carboxymethylaminomethyl modification enzyme MnmG (625 aa).

FAD-binding positions include 13–18 (GGGHAG), Val125, and Ser182. Residue 276 to 290 (GPRYCPSIEDKITRF) participates in NAD(+) binding. Position 373 (Gln373) interacts with FAD.

This sequence belongs to the MnmG family. Homodimer. Heterotetramer of two MnmE and two MnmG subunits. Requires FAD as cofactor.

It localises to the cytoplasm. In terms of biological role, NAD-binding protein involved in the addition of a carboxymethylaminomethyl (cmnm) group at the wobble position (U34) of certain tRNAs, forming tRNA-cmnm(5)s(2)U34. The chain is tRNA uridine 5-carboxymethylaminomethyl modification enzyme MnmG from Lactococcus lactis subsp. lactis (strain IL1403) (Streptococcus lactis).